The chain runs to 560 residues: Probable sulfate transporter MT1781 (560 aa).

A run of 11 helical transmembrane segments spans residues 29–49 (VLAG…YATV), 51–71 (GLPP…YALL), 79–99 (IGPE…MAAG), 105–125 (AVLA…AGTA), 138–158 (VLVG…LGTI), 184–204 (WPTF…TRWA), 207–227 (APGP…MSLD), 256–276 (ALII…VLTA), 333–353 (LIAL…LAMF), 355–375 (IAAL…LSEF), and 394–414 (AAVL…LSIL). The 116-residue stretch at 442–557 (DYPQAKRVPG…MTLPTAVQAF (116 aa)) folds into the STAS domain.

The protein belongs to the SLC26A/SulP transporter (TC 2.A.53) family.

It localises to the cell membrane. The sequence is that of Probable sulfate transporter MT1781 from Mycobacterium tuberculosis (strain CDC 1551 / Oshkosh).